The following is a 129-amino-acid chain: Small ribosomal subunit protein uS9 (129 aa).

Residues 108-129 form a disordered region; the sequence is RMVERKKYGKKKARKSFQFSKR. Over residues 114–129 the composition is skewed to basic residues; sequence KYGKKKARKSFQFSKR.

Belongs to the universal ribosomal protein uS9 family.

In Chlorobaculum tepidum (strain ATCC 49652 / DSM 12025 / NBRC 103806 / TLS) (Chlorobium tepidum), this protein is Small ribosomal subunit protein uS9.